The chain runs to 108 residues: Ribonuclease P protein component 4 (108 aa).

4 residues coordinate Zn(2+): Cys-60, Cys-63, Cys-86, and Cys-89.

Belongs to the eukaryotic/archaeal RNase P protein component 4 family. As to quaternary structure, consists of a catalytic RNA component and at least 4-5 protein subunits. Requires Zn(2+) as cofactor.

It localises to the cytoplasm. The enzyme catalyses Endonucleolytic cleavage of RNA, removing 5'-extranucleotides from tRNA precursor.. Its function is as follows. Part of ribonuclease P, a protein complex that generates mature tRNA molecules by cleaving their 5'-ends. This Sulfurisphaera tokodaii (strain DSM 16993 / JCM 10545 / NBRC 100140 / 7) (Sulfolobus tokodaii) protein is Ribonuclease P protein component 4.